The primary structure comprises 407 residues: Phenazine 1,6-dicarboxylic acid hydroxylase PhzS (407 aa).

Positions 17, 134, and 313 each coordinate FAD.

Requires FAD as cofactor.

The enzyme catalyses phenazine-1,6-dicarboxylate + NADH + O2 + 2 H(+) = 6-hydroxyphenazine-1-carboxylate + CO2 + NAD(+) + H2O. The catalysed reaction is 6-hydroxyphenazine-1-carboxylate + NADH + O2 + 2 H(+) = 1,6-dihydroxyphenazine + CO2 + NAD(+) + H2O. It catalyses the reaction phenazine-1-carboxylate + NADH + O2 + 2 H(+) = 1-hydroxyphenazine + CO2 + NAD(+) + H2O. Its function is as follows. Involved in the biosynthesis of phenazine natural products including myxin, an N(5),N(10)-dioxide phenazine antiobiotic, which has antimicrobial activity. Catalyzes the decarboxylative hydroxylations of phenazine 1,6-dicarboxylic acid (PDC) to produce 1,6-dihydroxyphenazine (DHP). Low activity with phenazine 1-carboxylic acid (PCA) to produce 1-hydroxyphenazine. In Lysobacter antibioticus, this protein is Phenazine 1,6-dicarboxylic acid hydroxylase PhzS.